The chain runs to 136 residues: ATP synthase epsilon chain (136 aa).

This sequence belongs to the ATPase epsilon chain family. As to quaternary structure, F-type ATPases have 2 components, CF(1) - the catalytic core - and CF(0) - the membrane proton channel. CF(1) has five subunits: alpha(3), beta(3), gamma(1), delta(1), epsilon(1). CF(0) has three main subunits: a, b and c.

It is found in the cell inner membrane. Its function is as follows. Produces ATP from ADP in the presence of a proton gradient across the membrane. In Hydrogenobaculum sp. (strain Y04AAS1), this protein is ATP synthase epsilon chain.